We begin with the raw amino-acid sequence, 498 residues long: Interferon regulatory factor 5 (498 aa).

Residue T10 is modified to Phosphothreonine. Positions 12 to 18 (PRRVRLK) match the Nuclear localization signal motif. Residues 14 to 122 (RVRLKPWLVA…QPYKIYEVCS (109 aa)) constitute a DNA-binding region (IRF tryptophan pentad repeat). Residues 121–207 (CSNGPAPTDS…SPLAPPPGNP (87 aa)) are disordered. A Nuclear export signal motif is present at residues 150-160 (LQRMLPSLSLT). At S158 the chain carries Phosphoserine; by TBK1. The span at 168-206 (TLQPPTLRPPTLQPPTLQPPVVLGPPAPDPSPLAPPPGN) shows a compositional bias: pro residues. A Phosphoserine; by TBK1 modification is found at S293. Position 301 is a phosphoserine (S301). Residues K411 and K412 each participate in a glycyl lysine isopeptide (Lys-Gly) (interchain with G-Cter in ubiquitin) cross-link. 4 positions are modified to phosphoserine: S431, S435, S437, and S440. Phosphoserine; by IKKB is present on S446. Positions 478 to 498 (PPGAGLGVGQGPWPMHPAGMQ) are disordered.

Belongs to the IRF family. As to quaternary structure, homodimer, when phosphorylated. Interacts with TASL (via pLxIS motif); interaction takes place downstream of TLR7, TLR8 or TLR9, leading to its activation. Interacts with MYD88 and TRAF6. Post-translationally, phosphorylation of serine and threonine residues by IKBKB in a C-terminal autoinhibitory region, stimulates dimerization, transport into the nucleus, assembly with the coactivator CBP/EP300 and initiation of transcription. 'Lys-63'-linked polyubiquitination by TRAF6 is required for activation.

It is found in the cytoplasm. It localises to the nucleus. Maintained as a monomer in an autoinhibited state. Phosphorylation and activation follow the following steps: innate adapter protein TASL recruits IRF5, thereby licensing IRF5 for phosphorylation by IKBKB. Phosphorylated IRF5 dissociates from the adapter proteins, dimerizes, and then enters the nucleus to induce IFNs. With respect to regulation, (Microbial infection) Activated upon coronavirus SARS-CoV-2 infection. Functionally, transcription factor that plays a critical role in innate immunity by activating expression of type I interferon (IFN) IFNA and INFB and inflammatory cytokines downstream of endolysosomal toll-like receptors TLR7, TLR8 and TLR9. Regulates the transcription of type I IFN genes (IFN-alpha and IFN-beta) and IFN-stimulated genes (ISG) by binding to an interferon-stimulated response element (ISRE) in their promoters. Can efficiently activate both the IFN-beta (IFNB) and the IFN-alpha (IFNA) genes and mediate their induction downstream of the TLR-activated, MyD88-dependent pathway. Key transcription factor regulating the IFN response during SARS-CoV-2 infection. The polypeptide is Interferon regulatory factor 5 (Homo sapiens (Human)).